The chain runs to 448 residues: tRNA(Ile)-lysidine synthase (448 aa).

Ser-28–Ser-33 is a binding site for ATP.

It belongs to the tRNA(Ile)-lysidine synthase family.

Its subcellular location is the cytoplasm. The catalysed reaction is cytidine(34) in tRNA(Ile2) + L-lysine + ATP = lysidine(34) in tRNA(Ile2) + AMP + diphosphate + H(+). Its function is as follows. Ligates lysine onto the cytidine present at position 34 of the AUA codon-specific tRNA(Ile) that contains the anticodon CAU, in an ATP-dependent manner. Cytidine is converted to lysidine, thus changing the amino acid specificity of the tRNA from methionine to isoleucine. This chain is tRNA(Ile)-lysidine synthase, found in Lactiplantibacillus plantarum (strain ATCC BAA-793 / NCIMB 8826 / WCFS1) (Lactobacillus plantarum).